Here is a 366-residue protein sequence, read N- to C-terminus: tRNA/tmRNA (uracil-C(5))-methyltransferase (366 aa).

Residues Q190, Y218, N223, E239, and D299 each contribute to the S-adenosyl-L-methionine site. The active-site Nucleophile is C324. E358 (proton acceptor) is an active-site residue.

The protein belongs to the class I-like SAM-binding methyltransferase superfamily. RNA M5U methyltransferase family. TrmA subfamily.

It carries out the reaction uridine(54) in tRNA + S-adenosyl-L-methionine = 5-methyluridine(54) in tRNA + S-adenosyl-L-homocysteine + H(+). The catalysed reaction is uridine(341) in tmRNA + S-adenosyl-L-methionine = 5-methyluridine(341) in tmRNA + S-adenosyl-L-homocysteine + H(+). Dual-specificity methyltransferase that catalyzes the formation of 5-methyluridine at position 54 (m5U54) in all tRNAs, and that of position 341 (m5U341) in tmRNA (transfer-mRNA). In Salmonella choleraesuis (strain SC-B67), this protein is tRNA/tmRNA (uracil-C(5))-methyltransferase.